The chain runs to 419 residues: uncharacterized protein (419 aa).

Helical transmembrane passes span 5-25 (MIIV…ALII), 26-46 (AAGV…AQQI), 53-73 (FPML…GGEL), 102-122 (VFGG…SVLI), 144-164 (VIDV…VSGV), 170-190 (FVAG…VCWF), 210-230 (ATLA…ILFL), 234-254 (LATP…LSLL), 274-294 (ATGV…VLTF), 309-329 (ISSP…VGMP), 332-352 (MPPA…TIGL), 360-380 (MMVI…TLFI), and 396-416 (LWPF…IPAL).

It belongs to the YiaN/YgiK family.

Its subcellular location is the cell inner membrane. This is an uncharacterized protein from Sinorhizobium fredii (strain NBRC 101917 / NGR234).